The sequence spans 474 residues: tRNA-2-methylthio-N(6)-dimethylallyladenosine synthase (474 aa).

Positions Lys-3–Arg-120 constitute an MTTase N-terminal domain. Residues Cys-12, Cys-49, Cys-83, Cys-157, Cys-161, and Cys-164 each coordinate [4Fe-4S] cluster. The region spanning Arg-143 to Arg-375 is the Radical SAM core domain. Residues Arg-378–Arg-441 form the TRAM domain.

The protein belongs to the methylthiotransferase family. MiaB subfamily. As to quaternary structure, monomer. It depends on [4Fe-4S] cluster as a cofactor.

The protein localises to the cytoplasm. It carries out the reaction N(6)-dimethylallyladenosine(37) in tRNA + (sulfur carrier)-SH + AH2 + 2 S-adenosyl-L-methionine = 2-methylsulfanyl-N(6)-dimethylallyladenosine(37) in tRNA + (sulfur carrier)-H + 5'-deoxyadenosine + L-methionine + A + S-adenosyl-L-homocysteine + 2 H(+). Functionally, catalyzes the methylthiolation of N6-(dimethylallyl)adenosine (i(6)A), leading to the formation of 2-methylthio-N6-(dimethylallyl)adenosine (ms(2)i(6)A) at position 37 in tRNAs that read codons beginning with uridine. This Shewanella baltica (strain OS155 / ATCC BAA-1091) protein is tRNA-2-methylthio-N(6)-dimethylallyladenosine synthase.